The primary structure comprises 671 residues: UvrABC system protein B (671 aa).

Positions 31–414 (DGFEQGEKAQ…ELNQTDHKVE (384 aa)) constitute a Helicase ATP-binding domain. 44–51 (GATGTGKT) serves as a coordination point for ATP. A Beta-hairpin motif is present at residues 97-120 (YYDYYQPEAYVPQSDTYIEKDSSI). In terms of domain architecture, Helicase C-terminal spans 435–601 (QIDDLVGEVN…TIVKPIRDVI (167 aa)). Positions 630–665 (QNMIKTLTAQMQEAAKKLDFEEAANLRDAIMDLKKQ) constitute a UVR domain.

The protein belongs to the UvrB family. As to quaternary structure, forms a heterotetramer with UvrA during the search for lesions. Interacts with UvrC in an incision complex.

The protein resides in the cytoplasm. In terms of biological role, the UvrABC repair system catalyzes the recognition and processing of DNA lesions. A damage recognition complex composed of 2 UvrA and 2 UvrB subunits scans DNA for abnormalities. Upon binding of the UvrA(2)B(2) complex to a putative damaged site, the DNA wraps around one UvrB monomer. DNA wrap is dependent on ATP binding by UvrB and probably causes local melting of the DNA helix, facilitating insertion of UvrB beta-hairpin between the DNA strands. Then UvrB probes one DNA strand for the presence of a lesion. If a lesion is found the UvrA subunits dissociate and the UvrB-DNA preincision complex is formed. This complex is subsequently bound by UvrC and the second UvrB is released. If no lesion is found, the DNA wraps around the other UvrB subunit that will check the other stand for damage. The polypeptide is UvrABC system protein B (Lactobacillus johnsonii (strain CNCM I-12250 / La1 / NCC 533)).